The primary structure comprises 92 residues: Protein OPG096 (92 aa).

Transmembrane regions (helical) follow at residues 39-59 and 67-87; these read PLIR…IFTV and QILL…LLYT.

The protein belongs to the orthopoxvirus OPG096 family. As to quaternary structure, interacts with OPG158.

It is found in the virion membrane. It localises to the host cytoplasm. The protein resides in the host endoplasmic reticulum membrane. Its function is as follows. Early protein involved in virion morphogenesis. Participates in the formation and elongation of crescent-shaped membrane precursors of immature virions in cytoplasmic factories. The sequence is that of Protein OPG096 (OPG096) from Monkeypox virus.